A 330-amino-acid polypeptide reads, in one-letter code: MKKTFILQQQEISFVKNTFTQNLIEQLGIIEVQGPILSQVGNGMQDNLSGIEKAVQVNVKCIPNAVFEVVHSLAKWKRHTLARFNFKEDEGLFVHMKALRPDEDSLDSTHSVYVDQWDWEKVIPEGRRNFAYLKETVNSIYRAIRLTELAVEARFDIPSILPKQITFVHSEDLVKRYPDLSSKERENAICKEYGAVFLIGIGGKLSDGKPHDGRAPDYDDWTTESENGYKGLNGDILVWNDQLGKAFELSSMGIRVDESALRLQVGLTGDEDRLKMDWHQDLLNGKLPLTIGGGIGQSRLAMLLLRKKHIGEVQSSVWPKEMLEEFSNIL.

It belongs to the class-II aminoacyl-tRNA synthetase family. AsnA subfamily.

It localises to the cytoplasm. It carries out the reaction L-aspartate + NH4(+) + ATP = L-asparagine + AMP + diphosphate + H(+). The protein operates within amino-acid biosynthesis; L-asparagine biosynthesis; L-asparagine from L-aspartate (ammonia route): step 1/1. This is Aspartate--ammonia ligase from Haemophilus influenzae (strain PittGG).